The chain runs to 253 residues: 5'/3'-nucleotidase SurE (253 aa).

Residues aspartate 8, aspartate 9, serine 39, and asparagine 92 each coordinate a divalent metal cation.

It belongs to the SurE nucleotidase family. It depends on a divalent metal cation as a cofactor.

The protein localises to the cytoplasm. It catalyses the reaction a ribonucleoside 5'-phosphate + H2O = a ribonucleoside + phosphate. It carries out the reaction a ribonucleoside 3'-phosphate + H2O = a ribonucleoside + phosphate. The enzyme catalyses [phosphate](n) + H2O = [phosphate](n-1) + phosphate + H(+). In terms of biological role, nucleotidase with a broad substrate specificity as it can dephosphorylate various ribo- and deoxyribonucleoside 5'-monophosphates and ribonucleoside 3'-monophosphates with highest affinity to 3'-AMP. Also hydrolyzes polyphosphate (exopolyphosphatase activity) with the preference for short-chain-length substrates (P20-25). Might be involved in the regulation of dNTP and NTP pools, and in the turnover of 3'-mononucleotides produced by numerous intracellular RNases (T1, T2, and F) during the degradation of various RNAs. The sequence is that of 5'/3'-nucleotidase SurE from Klebsiella pneumoniae (strain 342).